The sequence spans 2273 residues: Acetyl-CoA carboxylase, mitochondrial (2273 aa).

A mitochondrion-targeting transit peptide spans 1-104 (KGKTITHGQS…RGNIHKHTRL (104 aa)). The region spanning 134–635 (VISKILIANN…STGWLDDLIL (502 aa)) is the Biotin carboxylation domain. Positions 292-484 (KTNFVSVPDD…LPATQLQIAM (193 aa)) constitute an ATP-grasp domain. ATP is bound at residue 332–337 (GGGGKG). The active site involves R459. Residues 763–837 (LEAELNPTQV…EAGDVIAKLT (75 aa)) enclose the Biotinyl-binding domain. The residue at position 804 (K804) is an N6-biotinyllysine. The CoA carboxyltransferase N-terminal domain maps to 1532 to 1867 (PYSVKDWLQP…KRDMSPPLLE (336 aa)). A carboxyltransferase region spans residues 1532-2187 (PYSVKDWLQP…EGQVIKRLQK (656 aa)). 3 residues coordinate CoA: R1776, K2080, and R2082. Positions 1871–2187 (RWDRDVDFKP…EGQVIKRLQK (317 aa)) constitute a CoA carboxyltransferase C-terminal domain.

The cofactor is biotin.

It is found in the mitochondrion. It carries out the reaction hydrogencarbonate + acetyl-CoA + ATP = malonyl-CoA + ADP + phosphate + H(+). It catalyses the reaction N(6)-biotinyl-L-lysyl-[protein] + hydrogencarbonate + ATP = N(6)-carboxybiotinyl-L-lysyl-[protein] + ADP + phosphate + H(+). It participates in lipid metabolism; malonyl-CoA biosynthesis; malonyl-CoA from acetyl-CoA: step 1/1. Functionally, catalyzes the rate-limiting reaction in the mitochondrial fatty acid synthesis (FAS) type II pathway. Responsible for the production of the mitochondrial malonyl-CoA, used for the biosynthesis of the cofactor lipoic acid. This protein carries three functions: biotin carboxyl carrier protein, biotin carboxylase, and carboxyltransferase. In Saccharomyces cerevisiae (strain ATCC 204508 / S288c) (Baker's yeast), this protein is Acetyl-CoA carboxylase, mitochondrial (HFA1).